A 224-amino-acid chain; its full sequence is Putative O-methyltransferase MLBr01075 (224 aa).

S-adenosyl-L-methionine is bound by residues valine 51, glutamate 73, 75-76, serine 81, aspartate 99, and isoleucine 100; that span reads GT. Aspartate 147 contributes to the substrate binding site. Aspartate 149 lines the S-adenosyl-L-methionine pocket.

Belongs to the class I-like SAM-binding methyltransferase superfamily. Cation-dependent O-methyltransferase family.

This chain is Putative O-methyltransferase MLBr01075, found in Mycobacterium leprae (strain Br4923).